A 390-amino-acid polypeptide reads, in one-letter code: NADH-quinone oxidoreductase subunit D (390 aa).

It belongs to the complex I 49 kDa subunit family. As to quaternary structure, NDH-1 is composed of 14 different subunits. Subunits NuoB, C, D, E, F, and G constitute the peripheral sector of the complex.

The protein localises to the cell membrane. It catalyses the reaction a quinone + NADH + 5 H(+)(in) = a quinol + NAD(+) + 4 H(+)(out). In terms of biological role, NDH-1 shuttles electrons from NADH, via FMN and iron-sulfur (Fe-S) centers, to quinones in the respiratory chain. The immediate electron acceptor for the enzyme in this species is believed to be ubiquinone. Couples the redox reaction to proton translocation (for every two electrons transferred, four hydrogen ions are translocated across the cytoplasmic membrane), and thus conserves the redox energy in a proton gradient. This Wolbachia pipientis wMel protein is NADH-quinone oxidoreductase subunit D.